Consider the following 134-residue polypeptide: RFDSRGFPSLHPIDVNGSLFWHQNQRDFPKCRNNSAPLTQMGGRRVRWEVYISRARLVNRQIAWRRHPRCFDLHRRHRDRSSLRGRERCIGTRIPRAKSDVSTAYRVYRPTPLASYACYTVFGLGSIHPRFLML.

This is an uncharacterized protein from Human cytomegalovirus (strain AD169) (HHV-5).